Reading from the N-terminus, the 751-residue chain is Nucleoporin NUP37 (751 aa).

Residues 21–65 form a WD 1 repeat; sequence SLGRRIYDVKTYPVQSPQGATILIYGHENGATVVWRGGRRLKPPK. The segment at 57 to 77 is disordered; the sequence is GGRRLKPPKPQTNEKRNGTKP. The segment covering 68-77 has biased composition (basic and acidic residues); it reads TNEKRNGTKP. 4 WD repeats span residues 162–209, 237–271, 282–322, and 351–390; these read TNDV…LTGP, AQAAPITRVVVAAHSREASGTLRLWDVPLEAKPGT, YLPS…LPSD, and TSRKPIVAAEWIARGRAILTLLADGQWGIWDLDGASPTAA. The segment at 419–443 is disordered; sequence EGTSPLRNPTTQKASSSSSGEFVPM. The span at 423-438 shows a compositional bias: polar residues; sequence PLRNPTTQKASSSSSG. 2 WD repeats span residues 455 to 492 and 494 to 534; these read AFGGSPEKLAAVRGGITVAQLPSTLTSGAGDESAVLFL and GADP…RMIR. The disordered stretch occupies residues 671–692; the sequence is IPSTDAGDEETIPATSAPSSQQ. A compositionally biased stretch (polar residues) spans 683–692; that stretch reads PATSAPSSQQ. Positions 716–750 form a coiled coil; it reads RDVEQELLDIMEIDRELEQLEQARERGRKRVFFEE.

The nuclear pore complex (NPC) constitutes the exclusive means of nucleocytoplasmic transport. NPCs allow the passive diffusion of ions and small molecules and the active, nuclear transport receptor-mediated bidirectional transport of macromolecules such as proteins, RNAs, ribonucleoparticles (RNPs), and ribosomal subunits across the nuclear envelope. The 55-60 MDa NPC is composed of at least 28 different subunits: AMO1, ELYS, GLE1, GLE2, MLP1, NDC1, NIC96, NSP1, NUP133, NUP145, NUP152, NUP159, NUP170, NUP188, NUP192, NUP37, NUP49, NUP53, NUP56, NUP57, NUP82, NUP84, NUP85, POM152, POM33, POM34, SEC13 and SEH1. Due to its 8-fold rotational symmetry, all subunits are present with 8 copies or multiples thereof.

Its subcellular location is the nucleus. It localises to the nuclear pore complex. In Chaetomium thermophilum (strain DSM 1495 / CBS 144.50 / IMI 039719) (Thermochaetoides thermophila), this protein is Nucleoporin NUP37 (NUP37).